Consider the following 520-residue polypeptide: MGNVCVHMVNNCVDTKSNSWVRPTDLIMDHPLKPQLQDKPPQPMLMNKDDDKTKLNDTHGDPKLLEGKEKPAQKQTSQGQGGRKCSDEEYKKRAIACANSKRKAHNVRRLMSAGLQAESVLKTKTGHLKEYYNLGSKLGHGQFGTTFVCVEKGTGEEYACKSIPKRKLENEEDVEDVRREIEIMKHLLGQPNVISIKGAYEDSVAVHMVMELCRGGELFDRIVERGHYSERKAAHLAKVILGVVQTCHSLGVMHRDLKPENFLFVNDDEDSPLKAIDFGLSMFLKPGENFTDVVGSPYYIAPEVLNKNYGPEADIWSAGVMIYVLLSGSAPFWGETEEEIFNEVLEGELDLTSDPWPQVSESAKDLIRKMLERNPIQRLTAQQVLCHPWIRDEGNAPDTPLDTTVLSRLKKFSATDKLKKMALRVIAERLSEEEIHELRETFKTIDSGKSGRVTYKELKNGLERFNTNLDNSDINSLMQIPTDVHLEDTVDYNEFIEAIVRLRQIQEEEANDRLESSTKV.

Glycine 2 is lipidated: N-myristoyl glycine. The disordered stretch occupies residues 31–87 (PLKPQLQDKPPQPMLMNKDDDKTKLNDTHGDPKLLEGKEKPAQKQTSQGQGGRKCSD). The span at 47-72 (NKDDDKTKLNDTHGDPKLLEGKEKPA) shows a compositional bias: basic and acidic residues. Positions 132–390 (YNLGSKLGHG…AQQVLCHPWI (259 aa)) constitute a Protein kinase domain. ATP-binding positions include 138 to 146 (LGHGQFGTT) and lysine 161. Aspartate 256 acts as the Proton acceptor in catalysis. The residue at position 296 (serine 296) is a Phosphoserine. Residues 396-426 (APDTPLDTTVLSRLKKFSATDKLKKMALRVI) form an autoinhibitory domain region. The region spanning 433–468 (EEIHELRETFKTIDSGKSGRVTYKELKNGLERFNTN) is the EF-hand 1 domain. Ca(2+) is bound by residues aspartate 446, serine 450, arginine 452, glutamate 457, aspartate 483, glutamate 487, threonine 489, and glutamate 494. Residues 469–505 (LDNSDINSLMQIPTDVHLEDTVDYNEFIEAIVRLRQI) form the EF-hand 2; degenerate domain.

This sequence belongs to the protein kinase superfamily. Ser/Thr protein kinase family. CDPK subfamily.

It is found in the membrane. The catalysed reaction is L-seryl-[protein] + ATP = O-phospho-L-seryl-[protein] + ADP + H(+). The enzyme catalyses L-threonyl-[protein] + ATP = O-phospho-L-threonyl-[protein] + ADP + H(+). Activated by calcium. Autophosphorylation may play an important role in the regulation of the kinase activity. In terms of biological role, may play a role in signal transduction pathways that involve calcium as a second messenger. The sequence is that of Calcium-dependent protein kinase 25 (CPK25) from Arabidopsis thaliana (Mouse-ear cress).